Here is a 108-residue protein sequence, read N- to C-terminus: Nucleoid-associated protein Pmen_2646 (108 aa).

Positions 1–25 are disordered; that stretch reads MMKGGMAGLMKQAQQMQEKMQKMQE.

It belongs to the YbaB/EbfC family. As to quaternary structure, homodimer.

The protein resides in the cytoplasm. The protein localises to the nucleoid. Functionally, binds to DNA and alters its conformation. May be involved in regulation of gene expression, nucleoid organization and DNA protection. This chain is Nucleoid-associated protein Pmen_2646, found in Ectopseudomonas mendocina (strain ymp) (Pseudomonas mendocina).